Here is a 254-residue protein sequence, read N- to C-terminus: Leucyl/phenylalanyl-tRNA--protein transferase (254 aa).

It belongs to the L/F-transferase family.

The protein localises to the cytoplasm. The catalysed reaction is N-terminal L-lysyl-[protein] + L-leucyl-tRNA(Leu) = N-terminal L-leucyl-L-lysyl-[protein] + tRNA(Leu) + H(+). The enzyme catalyses N-terminal L-arginyl-[protein] + L-leucyl-tRNA(Leu) = N-terminal L-leucyl-L-arginyl-[protein] + tRNA(Leu) + H(+). It carries out the reaction L-phenylalanyl-tRNA(Phe) + an N-terminal L-alpha-aminoacyl-[protein] = an N-terminal L-phenylalanyl-L-alpha-aminoacyl-[protein] + tRNA(Phe). Its function is as follows. Functions in the N-end rule pathway of protein degradation where it conjugates Leu, Phe and, less efficiently, Met from aminoacyl-tRNAs to the N-termini of proteins containing an N-terminal arginine or lysine. In Bordetella bronchiseptica (strain ATCC BAA-588 / NCTC 13252 / RB50) (Alcaligenes bronchisepticus), this protein is Leucyl/phenylalanyl-tRNA--protein transferase.